A 1033-amino-acid chain; its full sequence is Tyrosine-protein kinase-like otk (1033 aa).

A signal peptide spans 1-22 (MTARMISICGLVMALMMASVLA). The Extracellular portion of the chain corresponds to 23–581 (SSSRFQRVPQ…GGDGFLVTRA (559 aa)). Ig-like C2-type domains are found at residues 25–114 (SRFQ…AKLS), 113–199 (LSVI…RVMS), 251–365 (PEDL…APIN), 368–463 (PGIL…VAIN), and 468–558 (PKFS…VQLV). The N-linked (GlcNAc...) asparagine glycan is linked to Asn-39. Intrachain disulfides connect Cys-46–Cys-95, Cys-137–Cys-188, Cys-276–Cys-354, and Cys-399–Cys-447. 7 N-linked (GlcNAc...) asparagine glycosylation sites follow: Asn-336, Asn-417, Asn-429, Asn-444, Asn-457, Asn-512, and Asn-524. Cys-490 and Cys-542 are oxidised to a cystine. A helical membrane pass occupies residues 582 to 602 (VLITMTVALAYIVLVVGLMLW). At 603–1033 (CRYRRQARKA…LSKAMQSAEK (431 aa)) the chain is on the cytoplasmic side. Disordered regions lie at residues 617–679 (LSTK…KKSA) and 718–760 (SPSD…KTSM). Over residues 655-673 (KSSGDAQKSDDTACSQQSR) the composition is skewed to polar residues. Position 678 is a phosphoserine (Ser-678). The 337-residue stretch at 692-1028 (LSELIQIGRG…QLGAALSKAM (337 aa)) folds into the Protein kinase; inactive domain. A compositionally biased stretch (basic and acidic residues) spans 720–731 (SDKDADTEKQHS).

The protein belongs to the protein kinase superfamily. Tyr protein kinase family. Insulin receptor subfamily. As to quaternary structure, interacts with plexA; component of a receptor complex that mediates the repulsive signaling in response to Semaphorin ligands. Dynamically expressed during embryogenesis in several areas of the developing nervous system, including neurons and fasciculating axons. Expression in stage 7 embryos is seen in the anterior midgut primordia, cephalic furrow and along the germinal band. At stage 11, expression is in 15 stripes over the trunk region, and in the anterior and posterior midgut primordia. Stage 12 shows expression in the developing nervous system, procephalic lobe and maxillar bud. Stage 13 shows expression in the ventral cord, maxillar segment and in three regions of the gut. At stage 16 expression is preferentially detected throughout the nervous system, including the neuromers in the ventral cord and the supraesophageal ganglion (at protein level). In larva, expression is seen in developing R cells and is localized predominantly to R1-R6 growth cones.

Its subcellular location is the cell membrane. Functionally, acts as a calcium-dependent, homophilic cell adhesion molecule that regulates neural recognition during the development of the nervous system. Component of the repulsive Plexin signaling response to regulate motor axon guidance at the embryonic stage. Also component of a receptor complex that is required in the adult visual system to innervate the lamina layer; specific targeting of R1-R6 axons. The protein is Tyrosine-protein kinase-like otk of Drosophila melanogaster (Fruit fly).